We begin with the raw amino-acid sequence, 169 residues long: Eukaryotic translation initiation factor 5A-2 (169 aa).

K64 carries the hypusine modification.

It belongs to the eIF-5A family. Post-translationally, lys-51 undergoes hypusination, a unique post-translational modification that consists in the addition of a butylamino group from spermidine to lysine side chain, leading to the formation of the unusual amino acid hypusine. eIF-5As are the only known proteins to undergo this modification, which is essential for their function.

It is found in the cytoplasm. The protein resides in the nucleus. In terms of biological role, translation factor that promotes translation elongation and termination, particularly upon ribosome stalling at specific amino acid sequence contexts. Binds between the exit (E) and peptidyl (P) site of the ribosome and promotes rescue of stalled ribosome: specifically required for efficient translation of polyproline-containing peptides as well as other motifs that stall the ribosome. Acts as a ribosome quality control (RQC) cofactor by joining the RQC complex to facilitate peptidyl transfer during CAT tailing step. In Schizosaccharomyces pombe (strain 972 / ATCC 24843) (Fission yeast), this protein is Eukaryotic translation initiation factor 5A-2 (tif51b).